The sequence spans 376 residues: Deoxyguanosinetriphosphate triphosphohydrolase-like protein (376 aa).

The interval 1 to 32 is disordered; that stretch reads MEPSFAPYAAHSSQTRGRVHREAPAAPRSEFQ. One can recognise an HD domain in the interval 65–196; the sequence is RLTHSIEVAQ…ANLADEIAYN (132 aa).

Belongs to the dGTPase family. Type 2 subfamily.

The sequence is that of Deoxyguanosinetriphosphate triphosphohydrolase-like protein from Thiobacillus denitrificans (strain ATCC 25259 / T1).